A 406-amino-acid chain; its full sequence is Testis-specific Y-encoded-like protein 4 (406 aa).

Disordered regions lie at residues 1 to 63 (MNGV…EHCG), 81 to 121 (GLED…AKPK), 161 to 189 (EAGA…TRPR), and 387 to 406 (VRVP…FQSG). Polar residues predominate over residues 8-20 (NELSLANTTTPSH). Over residues 93–102 (DAPSAPVAAD) the composition is skewed to low complexity. Positions 167-188 (QEKKGLQKEKKVAGGGKEETRP) are enriched in basic and acidic residues.

This sequence belongs to the nucleosome assembly protein (NAP) family.

The protein is Testis-specific Y-encoded-like protein 4 (Tspyl4) of Mus musculus (Mouse).